Here is a 969-residue protein sequence, read N- to C-terminus: Translation initiation factor IF-2 (969 aa).

The segment at 96-377 (KRDPAEPVRA…NSRNQHQDRR (282 aa)) is disordered. 3 stretches are compositionally biased toward low complexity: residues 105–157 (AEPA…QAEP), 167–181 (AAPA…EPAK), and 216–252 (PSAP…PAAP). A compositionally biased stretch (basic and acidic residues) spans 253 to 264 (DRAREEARRAAE). Over residues 357-366 (RAGGKGGRGG) the composition is skewed to gly residues. The tr-type G domain maps to 470–637 (PRAPVVTVMG…NVLLQAEILE (168 aa)). The interval 479 to 486 (GHVDHGKT) is G1. Position 479–486 (479–486 (GHVDHGKT)) interacts with GTP. The segment at 504 to 508 (GITQH) is G2. The G3 stretch occupies residues 525–528 (DTPG). GTP-binding positions include 525–529 (DTPGH) and 579–582 (NKID). A G4 region spans residues 579–582 (NKID). The tract at residues 615–617 (SAK) is G5.

It belongs to the TRAFAC class translation factor GTPase superfamily. Classic translation factor GTPase family. IF-2 subfamily.

It localises to the cytoplasm. Its function is as follows. One of the essential components for the initiation of protein synthesis. Protects formylmethionyl-tRNA from spontaneous hydrolysis and promotes its binding to the 30S ribosomal subunits. Also involved in the hydrolysis of GTP during the formation of the 70S ribosomal complex. The protein is Translation initiation factor IF-2 of Bordetella parapertussis (strain 12822 / ATCC BAA-587 / NCTC 13253).